Consider the following 190-residue polypeptide: RNA-binding protein OPG065 (190 aa).

The Z-binding domain occupies 5-70; the sequence is YIDERSDAEI…DIPPRWFMTT (66 aa). The region spanning 117–184 is the DRBM domain; that stretch reads NPVTIINEYC…AKLAVDKLLG (68 aa).

The protein belongs to the orthopoxvirus OPG065 family. In terms of assembly, interacts with host G1P2/ISG15. Interacts with host EIF2AK2/PKR. Interacts with host ZBP1.

In terms of biological role, RNA-binding protein that plays a role in the inhibition of multiple cellular antiviral responses activated by double-stranded RNA (dsRNA), such as inhibition of PKR activation, necroptosis, and IFN-mediated antiviral activities. Recognizes and binds Z-RNA structures via its Z-binding domain and dsRNA via its DRBM domain: RNA-binding activity is required to escape host ZBP1-dependent necroptosis. Mechanistically, the Z-binding domain binds Z-RNAs that are produced during vaccinia virus infection, thereby competing with Z-RNA detection by host ZBP1, suppressing ZBP1-dependent necroptosis. Acts as a key inhibitor of the interferon response by blocking the phosphorylation and subsequent activation of IRF3 and IRF7 kinases that are required for interferon-alpha gene expression. Inhibits NF-kappa-B activation and the ubiquitin-like protein ISG15, which is an early antiviral protein. The binding with host ISG15 subsequently blocks host ISGylation. The chain is RNA-binding protein OPG065 (OPG065) from Homo sapiens (Human).